The primary structure comprises 251 residues: Ubiquinone/menaquinone biosynthesis C-methyltransferase UbiE (251 aa).

S-adenosyl-L-methionine is bound by residues Thr74, Asp95, and 123 to 124 (NA).

The protein belongs to the class I-like SAM-binding methyltransferase superfamily. MenG/UbiE family.

It catalyses the reaction a 2-demethylmenaquinol + S-adenosyl-L-methionine = a menaquinol + S-adenosyl-L-homocysteine + H(+). The enzyme catalyses a 2-methoxy-6-(all-trans-polyprenyl)benzene-1,4-diol + S-adenosyl-L-methionine = a 5-methoxy-2-methyl-3-(all-trans-polyprenyl)benzene-1,4-diol + S-adenosyl-L-homocysteine + H(+). It participates in quinol/quinone metabolism; menaquinone biosynthesis; menaquinol from 1,4-dihydroxy-2-naphthoate: step 2/2. It functions in the pathway cofactor biosynthesis; ubiquinone biosynthesis. Its function is as follows. Methyltransferase required for the conversion of demethylmenaquinol (DMKH2) to menaquinol (MKH2) and the conversion of 2-polyprenyl-6-methoxy-1,4-benzoquinol (DDMQH2) to 2-polyprenyl-3-methyl-6-methoxy-1,4-benzoquinol (DMQH2). This chain is Ubiquinone/menaquinone biosynthesis C-methyltransferase UbiE, found in Shewanella putrefaciens (strain CN-32 / ATCC BAA-453).